A 419-amino-acid chain; its full sequence is Serine hydroxymethyltransferase (419 aa).

Residues L121 and 125–127 each bind (6S)-5,6,7,8-tetrahydrofolate; that span reads GHL. The residue at position 229 (K229) is an N6-(pyridoxal phosphate)lysine.

It belongs to the SHMT family. In terms of assembly, homodimer. The cofactor is pyridoxal 5'-phosphate.

It localises to the cytoplasm. The catalysed reaction is (6R)-5,10-methylene-5,6,7,8-tetrahydrofolate + glycine + H2O = (6S)-5,6,7,8-tetrahydrofolate + L-serine. It participates in one-carbon metabolism; tetrahydrofolate interconversion. The protein operates within amino-acid biosynthesis; glycine biosynthesis; glycine from L-serine: step 1/1. Catalyzes the reversible interconversion of serine and glycine with tetrahydrofolate (THF) serving as the one-carbon carrier. This reaction serves as the major source of one-carbon groups required for the biosynthesis of purines, thymidylate, methionine, and other important biomolecules. Also exhibits THF-independent aldolase activity toward beta-hydroxyamino acids, producing glycine and aldehydes, via a retro-aldol mechanism. The polypeptide is Serine hydroxymethyltransferase (Streptomyces griseus subsp. griseus (strain JCM 4626 / CBS 651.72 / NBRC 13350 / KCC S-0626 / ISP 5235)).